Reading from the N-terminus, the 918-residue chain is Serine/threonine-protein kinase D1 (918 aa).

Residue Y93 is modified to Phosphotyrosine. The Phorbol-ester/DAG-type 1 zinc finger occupies P144–C194. Residues S203, S206, S217, and S221 each carry the phosphoserine modification. The Phorbol-ester/DAG-type 2 zinc finger occupies P276–C326. Disordered stretches follow at residues S338–L362 and A379–I410. Positions V345 to D355 are enriched in acidic residues. Residue S351 is modified to Phosphoserine. Positions R400–I410 are enriched in polar residues. 2 positions are modified to phosphoserine; by MAPK13: S403 and S407. The PH domain maps to T428–M547. Phosphotyrosine is present on Y438. S454 is modified (phosphoserine). Y469 is subject to Phosphotyrosine; by ABL. Residue Y508 is modified to Phosphotyrosine. Position 554 is a phosphoserine (S554). Residues I589–L845 enclose the Protein kinase domain. ATP contacts are provided by residues L595–V603 and K618. The active-site Proton acceptor is the D712. At S744 the chain carries Phosphoserine; by PKC/PRKCD. S748 bears the Phosphoserine; by autocatalysis and PKC/PRKCD mark. Y755 is modified (phosphotyrosine). S916 bears the Phosphoserine; by autocatalysis mark.

This sequence belongs to the protein kinase superfamily. CAMK Ser/Thr protein kinase family. PKD subfamily. As to quaternary structure, interacts (via N-terminus) with ADAP1/CENTA1. Interacts with MAPK13. Interacts with DAPK1 in an oxidative stress-regulated manner. Interacts with USP28; the interaction induces phosphorylation of USP28 and activated KRAS-mediated stabilization of ZNF304. Interacts with AKAP13 (via C-terminal domain). The cofactor is Mg(2+). In terms of processing, phosphorylated at Ser-403 and Ser-407 by MAPK13 during regulation of insulin secretion in pancreatic beta cells. Phosphorylated by DAPK1. Phosphorylated at Tyr-93 and by ABL at Tyr-469, which primes the kinase in response to oxidative stress, and promotes a second step activating phosphorylation at Ser-744/Ser-748 by PKRD. Phosphorylated at Ser-916 upon S.enterica infection in macrophages.

It is found in the cytoplasm. Its subcellular location is the cell membrane. It localises to the golgi apparatus. The protein localises to the trans-Golgi network. It catalyses the reaction L-seryl-[protein] + ATP = O-phospho-L-seryl-[protein] + ADP + H(+). The enzyme catalyses L-threonyl-[protein] + ATP = O-phospho-L-threonyl-[protein] + ADP + H(+). Activated by DAG and phorbol esters. Phorbol-ester/DAG-type domain 1 binds DAG with high affinity and appears to play the dominant role in mediating translocation to the cell membrane and trans-Golgi network. Phorbol-ester/DAG-type domain 2 binds phorbol ester with higher affinity. Autophosphorylation of Ser-748 and phosphorylation of Ser-744 by PKC relieves auto-inhibition by the PH domain. Phosphorylation on Tyr-469 by the SRC-ABL1 pathway in response to oxidative stress, is also required for activation. Activated by DAPK1 under oxidative stress. Its function is as follows. Serine/threonine-protein kinase that converts transient diacylglycerol (DAG) signals into prolonged physiological effects downstream of PKC, and is involved in the regulation of MAPK8/JNK1 and Ras signaling, Golgi membrane integrity and trafficking, cell survival through NF-kappa-B activation, cell migration, cell differentiation by mediating HDAC7 nuclear export, cell proliferation via MAPK1/3 (ERK1/2) signaling, and plays a role in cardiac hypertrophy, VEGFA-induced angiogenesis, genotoxic-induced apoptosis and flagellin-stimulated inflammatory response. Phosphorylates the epidermal growth factor receptor (EGFR) on dual threonine residues, which leads to the suppression of epidermal growth factor (EGF)-induced MAPK8/JNK1 activation and subsequent JUN phosphorylation. Phosphorylates RIN1, inducing RIN1 binding to 14-3-3 proteins YWHAB, YWHAE and YWHAZ and increased competition with RAF1 for binding to GTP-bound form of Ras proteins (NRAS, HRAS and KRAS). Acts downstream of the heterotrimeric G-protein beta/gamma-subunit complex to maintain the structural integrity of the Golgi membranes, and is required for protein transport along the secretory pathway. In the trans-Golgi network (TGN), regulates the fission of transport vesicles that are on their way to the plasma membrane. May act by activating the lipid kinase phosphatidylinositol 4-kinase beta (PI4KB) at the TGN for the local synthesis of phosphorylated inositol lipids, which induces a sequential production of DAG, phosphatidic acid (PA) and lyso-PA (LPA) that are necessary for membrane fission and generation of specific transport carriers to the cell surface. Under oxidative stress, is phosphorylated at Tyr-469 via SRC-ABL1 and contributes to cell survival by activating IKK complex and subsequent nuclear translocation and activation of NFKB1. Involved in cell migration by regulating integrin alpha-5/beta-3 recycling and promoting its recruitment in newly forming focal adhesion. In osteoblast differentiation, mediates the bone morphogenetic protein 2 (BMP2)-induced nuclear export of HDAC7, which results in the inhibition of HDAC7 transcriptional repression of RUNX2. In neurons, plays an important role in neuronal polarity by regulating the biogenesis of TGN-derived dendritic vesicles, and is involved in the maintenance of dendritic arborization and Golgi structure in hippocampal cells. May potentiate mitogenesis induced by the neuropeptide bombesin or vasopressin by mediating an increase in the duration of MAPK1/3 (ERK1/2) signaling, which leads to accumulation of immediate-early gene products including FOS that stimulate cell cycle progression. Plays an important role in the proliferative response induced by low calcium in keratinocytes, through sustained activation of MAPK1/3 (ERK1/2) pathway. Downstream of novel PKC signaling, plays a role in cardiac hypertrophy by phosphorylating HDAC5, which in turn triggers XPO1/CRM1-dependent nuclear export of HDAC5, MEF2A transcriptional activation and induction of downstream target genes that promote myocyte hypertrophy and pathological cardiac remodeling. Mediates cardiac troponin I (TNNI3) phosphorylation at the PKA sites, which results in reduced myofilament calcium sensitivity, and accelerated crossbridge cycling kinetics. The PRKD1-HDAC5 pathway is also involved in angiogenesis by mediating VEGFA-induced specific subset of gene expression, cell migration, and tube formation. In response to VEGFA, is necessary and required for HDAC7 phosphorylation which induces HDAC7 nuclear export and endothelial cell proliferation and migration. During apoptosis induced by cytarabine and other genotoxic agents, PRKD1 is cleaved by caspase-3 at Asp-378, resulting in activation of its kinase function and increased sensitivity of cells to the cytotoxic effects of genotoxic agents. In epithelial cells, is required for transducing flagellin-stimulated inflammatory responses by binding and phosphorylating TLR5, which contributes to MAPK14/p38 activation and production of inflammatory cytokines. Acts as an activator of NLRP3 inflammasome assembly by mediating phosphorylation of NLRP3. May play a role in inflammatory response by mediating activation of NF-kappa-B. May be involved in pain transmission by directly modulating TRPV1 receptor. Plays a role in activated KRAS-mediated stabilization of ZNF304 in colorectal cancer (CRC) cells. Regulates nuclear translocation of transcription factor TFEB in macrophages upon live S.enterica infection. This chain is Serine/threonine-protein kinase D1 (Prkd1), found in Mus musculus (Mouse).